The primary structure comprises 185 residues: Ribosome-recycling factor (185 aa).

The interval 138-159 is disordered; it reads KVKKLEKDKEISEDESKKAQEQ.

This sequence belongs to the RRF family.

Its subcellular location is the cytoplasm. Its function is as follows. Responsible for the release of ribosomes from messenger RNA at the termination of protein biosynthesis. May increase the efficiency of translation by recycling ribosomes from one round of translation to another. The polypeptide is Ribosome-recycling factor (Helicobacter acinonychis (strain Sheeba)).